A 363-amino-acid chain; its full sequence is Protein LEG1 homolog (363 aa).

The N-terminal stretch at 1–19 (MQCVWTLSLLQLVALWANA) is a signal peptide. N-linked (GlcNAc...) asparagine glycosylation is found at N79, N261, and N292.

Belongs to the LEG1 family.

The protein localises to the secreted. Its function is as follows. May be involved in early liver development. The sequence is that of Protein LEG1 homolog from Oncorhynchus mykiss (Rainbow trout).